We begin with the raw amino-acid sequence, 181 residues long: Adenine phosphoribosyltransferase (181 aa).

This sequence belongs to the purine/pyrimidine phosphoribosyltransferase family. In terms of assembly, homodimer.

The protein resides in the cytoplasm. The enzyme catalyses AMP + diphosphate = 5-phospho-alpha-D-ribose 1-diphosphate + adenine. The protein operates within purine metabolism; AMP biosynthesis via salvage pathway; AMP from adenine: step 1/1. Functionally, catalyzes a salvage reaction resulting in the formation of AMP, that is energically less costly than de novo synthesis. This Brucella suis (strain ATCC 23445 / NCTC 10510) protein is Adenine phosphoribosyltransferase.